A 373-amino-acid chain; its full sequence is Dual-specificity RNA methyltransferase RlmN (373 aa).

The active-site Proton acceptor is E101. The Radical SAM core domain occupies 107–350 (ENKRTTLCVS…TIIRKIRGAD (244 aa)). C114 and C355 are joined by a disulfide. The [4Fe-4S] cluster site is built by C121, C125, and C128. Residues 179-180 (GE), S211, 233-235 (SLH), and N312 contribute to the S-adenosyl-L-methionine site. The S-methylcysteine intermediate role is filled by C355.

It belongs to the radical SAM superfamily. RlmN family. The cofactor is [4Fe-4S] cluster.

The protein localises to the cytoplasm. The catalysed reaction is adenosine(2503) in 23S rRNA + 2 reduced [2Fe-2S]-[ferredoxin] + 2 S-adenosyl-L-methionine = 2-methyladenosine(2503) in 23S rRNA + 5'-deoxyadenosine + L-methionine + 2 oxidized [2Fe-2S]-[ferredoxin] + S-adenosyl-L-homocysteine. It carries out the reaction adenosine(37) in tRNA + 2 reduced [2Fe-2S]-[ferredoxin] + 2 S-adenosyl-L-methionine = 2-methyladenosine(37) in tRNA + 5'-deoxyadenosine + L-methionine + 2 oxidized [2Fe-2S]-[ferredoxin] + S-adenosyl-L-homocysteine. Its function is as follows. Specifically methylates position 2 of adenine 2503 in 23S rRNA and position 2 of adenine 37 in tRNAs. m2A2503 modification seems to play a crucial role in the proofreading step occurring at the peptidyl transferase center and thus would serve to optimize ribosomal fidelity. This Blochmanniella pennsylvanica (strain BPEN) protein is Dual-specificity RNA methyltransferase RlmN.